Here is a 249-residue protein sequence, read N- to C-terminus: Probable septum site-determining protein MinC (249 aa).

The disordered stretch occupies residues 116–149 (AAVSPPPPPPPPPARAEPAAPVARPAPGRMQRNA). The segment covering 119-130 (SPPPPPPPPPAR) has biased composition (pro residues). Over residues 131–142 (AEPAAPVARPAP) the composition is skewed to low complexity.

Belongs to the MinC family. As to quaternary structure, interacts with MinD and FtsZ.

Cell division inhibitor that blocks the formation of polar Z ring septums. Rapidly oscillates between the poles of the cell to destabilize FtsZ filaments that have formed before they mature into polar Z rings. Prevents FtsZ polymerization. The sequence is that of Probable septum site-determining protein MinC from Xanthomonas campestris pv. campestris (strain ATCC 33913 / DSM 3586 / NCPPB 528 / LMG 568 / P 25).